The following is a 365-amino-acid chain: DNA replication and repair protein RecF (365 aa).

30–37 (GLNGSGKT) provides a ligand contact to ATP.

The protein belongs to the RecF family.

It localises to the cytoplasm. The RecF protein is involved in DNA metabolism; it is required for DNA replication and normal SOS inducibility. RecF binds preferentially to single-stranded, linear DNA. It also seems to bind ATP. In Cellvibrio japonicus (strain Ueda107) (Pseudomonas fluorescens subsp. cellulosa), this protein is DNA replication and repair protein RecF.